We begin with the raw amino-acid sequence, 134 residues long: Histone H2B (134 aa).

Polar residues predominate over residues 1–10 (MSDKASTPKK). Disordered regions lie at residues 1–29 (MSDK…EAKK) and 113–134 (VSEG…SKSR). A compositionally biased stretch (basic and acidic residues) spans 12–29 (ATKDATKPKKVGDEEAKK). Residues 125–134 (GQPTSGSKSR) show a composition bias toward polar residues.

It belongs to the histone H2B family. The nucleosome is a histone octamer containing two molecules each of H2A, H2B, H3 and H4 assembled in one H3-H4 heterotetramer and two H2A-H2B heterodimers. The octamer wraps approximately 147 bp of DNA.

It is found in the nucleus. Its subcellular location is the chromosome. Core component of nucleosome. Nucleosomes wrap and compact DNA into chromatin, limiting DNA accessibility to the cellular machineries which require DNA as a template. Histones thereby play a central role in transcription regulation, DNA repair, DNA replication and chromosomal stability. DNA accessibility is regulated via a complex set of post-translational modifications of histones, also called histone code, and nucleosome remodeling. This Entamoeba invadens protein is Histone H2B.